A 487-amino-acid polypeptide reads, in one-letter code: Cytochrome P450 716A75 (487 aa).

A helical transmembrane segment spans residues 5–25 (FVSLLSLFLLILLPLSLLFLF). Cysteine 434 contributes to the heme binding site.

This sequence belongs to the cytochrome P450 family. Requires heme as cofactor.

The protein resides in the membrane. It carries out the reaction beta-amyrin + reduced [NADPH--hemoprotein reductase] + O2 = erythrodiol + oxidized [NADPH--hemoprotein reductase] + H2O + H(+). The enzyme catalyses erythrodiol + reduced [NADPH--hemoprotein reductase] + O2 = oleanolic aldehyde + oxidized [NADPH--hemoprotein reductase] + 2 H2O + H(+). The catalysed reaction is oleanolic aldehyde + reduced [NADPH--hemoprotein reductase] + O2 = oleanolate + oxidized [NADPH--hemoprotein reductase] + H2O + 2 H(+). Catalyzes the C-28 oxidation of beta-amyrin to form erythrodiol. Catalyzes the C-28 oxidation of erythrodiol to form oleanolic aldehyde. Catalyzes the C-28 oxidation of oleanolic aldehyde to form oleanolate. The protein is Cytochrome P450 716A75 of Maesa lanceolata (False assegai).